Consider the following 457-residue polypeptide: Cysteine--tRNA ligase (457 aa).

Zn(2+) is bound at residue Cys28. The short motif at 30–40 (ITVYDLCHIGH) is the 'HIGH' region element. Positions 209, 234, and 238 each coordinate Zn(2+). The short motif at 266–270 (KMSKS) is the 'KMSKS' region element. Lys269 provides a ligand contact to ATP.

Belongs to the class-I aminoacyl-tRNA synthetase family. As to quaternary structure, monomer. It depends on Zn(2+) as a cofactor.

It localises to the cytoplasm. It catalyses the reaction tRNA(Cys) + L-cysteine + ATP = L-cysteinyl-tRNA(Cys) + AMP + diphosphate. In Sodalis glossinidius (strain morsitans), this protein is Cysteine--tRNA ligase.